The chain runs to 443 residues: Chromosomal replication initiator protein DnaA (443 aa).

Residues 1–73 (MYGDYRQIWE…YDAASKVTNR (73 aa)) form a domain I, interacts with DnaA modulators region. The segment at 73–106 (RFIEIKILSEDEEEYREIKESIERENSSESTLLS) is domain II. The interval 107 to 323 (TLNPKYTFDT…GALIRIVAFA (217 aa)) is domain III, AAA+ region. Positions 151, 153, 154, and 155 each coordinate ATP. Positions 324-443 (TLTKSNIDLE…EELKKRIKGY (120 aa)) are domain IV, binds dsDNA.

The protein belongs to the DnaA family. Oligomerizes as a right-handed, spiral filament on DNA at oriC.

The protein localises to the cytoplasm. Its function is as follows. Plays an essential role in the initiation and regulation of chromosomal replication. ATP-DnaA binds to the origin of replication (oriC) to initiate formation of the DNA replication initiation complex once per cell cycle. Binds the DnaA box (a 9 base pair repeat at the origin) and separates the double-stranded (ds)DNA. Forms a right-handed helical filament on oriC DNA; dsDNA binds to the exterior of the filament while single-stranded (ss)DNA is stabiized in the filament's interior. The ATP-DnaA-oriC complex binds and stabilizes one strand of the AT-rich DNA unwinding element (DUE), permitting loading of DNA polymerase. After initiation quickly degrades to an ADP-DnaA complex that is not apt for DNA replication. Binds acidic phospholipids. The sequence is that of Chromosomal replication initiator protein DnaA from Caldanaerobacter subterraneus subsp. tengcongensis (strain DSM 15242 / JCM 11007 / NBRC 100824 / MB4) (Thermoanaerobacter tengcongensis).